The sequence spans 278 residues: Octanoyl-[GcvH]:protein N-octanoyltransferase (278 aa).

The 206-residue stretch at 44–249 (SQSPPTLRAW…TLQQHGASLL (206 aa)) folds into the BPL/LPL catalytic domain. Residue Cys-148 is the Acyl-thioester intermediate of the active site.

It belongs to the octanoyltransferase LipL family.

It carries out the reaction N(6)-octanoyl-L-lysyl-[glycine-cleavage complex H protein] + L-lysyl-[lipoyl-carrier protein] = N(6)-octanoyl-L-lysyl-[lipoyl-carrier protein] + L-lysyl-[glycine-cleavage complex H protein]. The protein operates within protein modification; protein lipoylation via endogenous pathway; protein N(6)-(lipoyl)lysine from octanoyl-[acyl-carrier-protein]. Its function is as follows. Catalyzes the amidotransfer (transamidation) of the octanoyl moiety from octanoyl-GcvH to the lipoyl domain of the E2 subunit of lipoate-dependent enzymes. The chain is Octanoyl-[GcvH]:protein N-octanoyltransferase from Halalkalibacterium halodurans (strain ATCC BAA-125 / DSM 18197 / FERM 7344 / JCM 9153 / C-125) (Bacillus halodurans).